The following is a 507-amino-acid chain: Inositol-3-phosphate synthase (507 aa).

NAD(+) contacts are provided by Gly-70, Gly-71, Asn-72, Asn-73, Asp-143, Ile-180, Gln-190, Arg-193, Thr-230, Ala-231, Asn-232, Thr-233, Gly-281, Ser-282, Asp-306, Ser-309, Asn-340, Asn-341, Asp-342, Lys-355, Ala-391, Asp-419, and Ser-420.

This sequence belongs to the myo-inositol 1-phosphate synthase family. It depends on NAD(+) as a cofactor.

It localises to the cytoplasm. Its subcellular location is the cytosol. The protein localises to the nucleus. It catalyses the reaction D-glucose 6-phosphate = 1D-myo-inositol 3-phosphate. It participates in polyol metabolism; myo-inositol biosynthesis; myo-inositol from D-glucose 6-phosphate: step 1/2. In terms of biological role, key enzyme in myo-inositol biosynthesis pathway that catalyzes the conversion of glucose 6-phosphate to 1-myo-inositol 1-phosphate in a NAD-dependent manner. This Citrus paradisi (Grapefruit) protein is Inositol-3-phosphate synthase.